A 400-amino-acid polypeptide reads, in one-letter code: Homoserine O-acetyltransferase (400 aa).

Positions 64 to 374 (NAILVCHALT…DKGHDAFLLD (311 aa)) constitute an AB hydrolase-1 domain. The active-site Nucleophile is S169. R239 lines the substrate pocket. Active-site residues include D335 and H368. D369 is a binding site for substrate.

This sequence belongs to the AB hydrolase superfamily. MetX family. In terms of assembly, homodimer.

Its subcellular location is the cytoplasm. The catalysed reaction is L-homoserine + acetyl-CoA = O-acetyl-L-homoserine + CoA. It participates in amino-acid biosynthesis; L-methionine biosynthesis via de novo pathway; O-acetyl-L-homoserine from L-homoserine: step 1/1. Functionally, transfers an acetyl group from acetyl-CoA to L-homoserine, forming acetyl-L-homoserine. In Rhodopseudomonas palustris (strain ATCC BAA-98 / CGA009), this protein is Homoserine O-acetyltransferase.